Here is a 607-residue protein sequence, read N- to C-terminus: Synaptotagmin-like protein 3 (607 aa).

One can recognise a RabBD domain in the interval 4–123 (EVDLESFKEL…IKTGEWFFEE (120 aa)). The segment at 221–279 (VGHTERRSQSDTAVNVTSRKASTPDILKAFHQEDPKHPPDPVLKQDTPPSSPTHSAVFS) is disordered. Over residues 230-241 (SDTAVNVTSRKA) the composition is skewed to polar residues. Residues 248-259 (KAFHQEDPKHPP) are compositionally biased toward basic and acidic residues. 2 C2 domains span residues 305 to 430 (VTGE…ARWY) and 458 to 590 (LPAG…LQWH).

Monomer. Binds NRXN1. Binds RAB27A that has been activated by GTP-binding via its N-terminus. As to expression, highly expressed in spleen and lung. Detected at lower levels in heart and testis.

It localises to the endomembrane system. Its function is as follows. May act as Rab effector protein and play a role in vesicle trafficking. Binds phospholipids in the presence of calcium ions. This chain is Synaptotagmin-like protein 3 (Sytl3), found in Mus musculus (Mouse).